Consider the following 159-residue polypeptide: Large ribosomal subunit protein uL11 (159 aa).

This sequence belongs to the universal ribosomal protein uL11 family. In terms of assembly, part of the ribosomal stalk of the 50S ribosomal subunit. Interacts with L10 and the large rRNA to form the base of the stalk. L10 forms an elongated spine to which L12 dimers bind in a sequential fashion forming a multimeric L10(L12)X complex.

Its function is as follows. Forms part of the ribosomal stalk which helps the ribosome interact with GTP-bound translation factors. The sequence is that of Large ribosomal subunit protein uL11 from Methanococcus maripaludis (strain C6 / ATCC BAA-1332).